A 276-amino-acid polypeptide reads, in one-letter code: Melibiose/raffinose/stachyose import permease protein MelC (276 aa).

The next 6 helical transmembrane spans lie at 11 to 31 (IITLLAAIVACAHFIPFYILL), 74 to 94 (IITGFSALLLIIFGSLAAYPL), 104 to 124 (AVFALLISIMIIPPLTSMVPL), 139 to 159 (IAIFINTAAYMPLTVFLYSGF), 186 to 206 (IVFPLLKPITATICIISCVFI), and 240 to 260 (LHLVAAAALMAMLPMVVLFLA). The region spanning 69–261 (FINTMIITGF…LPMVVLFLAL (193 aa)) is the ABC transmembrane type-1 domain.

The protein belongs to the binding-protein-dependent transport system permease family. The complex is composed of two ATP-binding proteins (MsmX), two transmembrane proteins (MelC and MelD) and a solute-binding protein (MelE).

Its subcellular location is the cell membrane. Its function is as follows. Part of the ABC transporter complex MelEDC-MsmX involved in melibiose, raffinose and stachyose import. Probably responsible for the translocation of the substrate across the membrane. The chain is Melibiose/raffinose/stachyose import permease protein MelC from Bacillus subtilis (strain 168).